Here is a 631-residue protein sequence, read N- to C-terminus: uncharacterized protein (631 aa).

Positions 1–19 (MSKMGSSSMGELQDGITQE) are enriched in polar residues. The segment at 1–92 (MSKMGSSSMG…EENYPRLQTT (92 aa)) is disordered. Residues 67–76 (KKKKKKKLKK) show a composition bias toward basic residues. Residues 277-426 (LAIDCEMVRT…EDALACVDLL (150 aa)) form the Exonuclease domain. Polar residues predominate over residues 517–526 (ANRNTKQENN). A disordered region spans residues 517 to 540 (ANRNTKQENNSDTDTENDSVEEDQ). A compositionally biased stretch (acidic residues) spans 527–540 (SDTDTENDSVEEDQ).

Belongs to the REXO1/REXO3 family.

The protein resides in the nucleus. This is an uncharacterized protein from Schizosaccharomyces pombe (strain 972 / ATCC 24843) (Fission yeast).